Here is an 827-residue protein sequence, read N- to C-terminus: Beta-galactosidase 1 (827 aa).

The signal sequence occupies residues 1-25; sequence MMGRRGSSWCRWWVALLVLAVAADA. E187 serves as the catalytic Proton donor. 2 N-linked (GlcNAc...) asparagine glycosylation sites follow: N198 and N249. E259 serves as the catalytic Nucleophile. N260, N366, N392, N502, N520, N578, N586, and N615 each carry an N-linked (GlcNAc...) asparagine glycan. Residues 746–827 enclose the SUEL-type lectin domain; it reads GEAGDAVTLS…SGVLTVQATC (82 aa).

The protein belongs to the glycosyl hydrolase 35 family.

Its subcellular location is the secreted. It is found in the extracellular space. It localises to the apoplast. It carries out the reaction Hydrolysis of terminal non-reducing beta-D-galactose residues in beta-D-galactosides.. This is Beta-galactosidase 1 from Oryza sativa subsp. japonica (Rice).